The chain runs to 141 residues: Hemoglobin subunit alpha (141 aa).

One can recognise a Globin domain in the interval valine 1 to arginine 141. Residue serine 3 is modified to Phosphoserine. 2 positions are modified to N6-succinyllysine: lysine 7 and lysine 11. Lysine 16 carries the post-translational modification N6-acetyllysine; alternate. N6-succinyllysine; alternate is present on lysine 16. Tyrosine 24 carries the post-translational modification Phosphotyrosine. The residue at position 35 (serine 35) is a Phosphoserine. An N6-succinyllysine modification is found at lysine 40. The residue at position 49 (serine 49) is a Phosphoserine. Position 58 (histidine 58) interacts with O2. Histidine 87 serves as a coordination point for heme b. Serine 102 is subject to Phosphoserine. Threonine 108 is subject to Phosphothreonine. Phosphoserine is present on serine 124. Residues threonine 134 and threonine 137 each carry the phosphothreonine modification. At serine 138 the chain carries Phosphoserine.

The protein belongs to the globin family. As to quaternary structure, heterotetramer of two alpha chains and two beta chains. In terms of tissue distribution, red blood cells.

In terms of biological role, involved in oxygen transport from the lung to the various peripheral tissues. Hemopressin acts as an antagonist peptide of the cannabinoid receptor CNR1. Hemopressin-binding efficiently blocks cannabinoid receptor CNR1 and subsequent signaling. In Talpa europaea (European mole), this protein is Hemoglobin subunit alpha (HBA).